The primary structure comprises 435 residues: Xylose isomerase (435 aa).

Catalysis depends on residues histidine 100 and aspartate 103. Residues glutamate 231, glutamate 267, histidine 270, aspartate 295, aspartate 306, aspartate 308, and aspartate 338 each contribute to the Mg(2+) site.

The protein belongs to the xylose isomerase family. In terms of assembly, homotetramer. The cofactor is Mg(2+).

It is found in the cytoplasm. It carries out the reaction alpha-D-xylose = alpha-D-xylulofuranose. This Brucella canis (strain ATCC 23365 / NCTC 10854 / RM-666) protein is Xylose isomerase.